Reading from the N-terminus, the 406-residue chain is Phosphorylase b kinase gamma catalytic chain, liver/testis isoform (406 aa).

Positions 24–291 constitute a Protein kinase domain; that stretch reads YDPKDVIGRG…AEQALQHPFF (268 aa). ATP contacts are provided by residues 30–38 and Lys-53; that span reads IGRGVSSVV. Residue Asp-153 is the Proton acceptor of the active site. Residues 306–330 form a calmodulin-binding (domain-N) region; the sequence is QRFRVAVWTVLAAGRVALSAHRIRP. Residues 346-370 form a calmodulin-binding (domain-C) region; it reads VRRLIDNCAFRLYGHWVKKGEQQNR.

Belongs to the protein kinase superfamily. CAMK Ser/Thr protein kinase family. As to quaternary structure, hexadecamer of 4 heterotetramers, each composed of alpha, beta, gamma, and delta subunits. Alpha (PHKA1 or PHKA2) and beta (PHKB) are regulatory subunits, gamma (PHKG1 or PHKG2) is the catalytic subunit, and delta is calmodulin.

It carries out the reaction 2 ATP + phosphorylase b = 2 ADP + phosphorylase a.. In terms of biological role, catalytic subunit of the phosphorylase b kinase (PHK), which mediates the neural and hormonal regulation of glycogen breakdown (glycogenolysis) by phosphorylating and thereby activating glycogen phosphorylase. May regulate glycogeneolysis in the testis. In vitro, phosphorylates PYGM. The sequence is that of Phosphorylase b kinase gamma catalytic chain, liver/testis isoform (PHKG2) from Bos taurus (Bovine).